Here is a 369-residue protein sequence, read N- to C-terminus: Putative 2-aminoethylphosphonate import ATP-binding protein PhnT (369 aa).

Residues 19–250 form the ABC transporter domain; that stretch reads IVLDSLRVAY…PPNRFAAEFL (232 aa). Residue 51–58 coordinates ATP; that stretch reads GPSGSGKT.

The protein belongs to the ABC transporter superfamily. 2-aminoethylphosphonate importer (TC 3.A.1.11.5) family.

The protein resides in the cell inner membrane. In terms of biological role, probably part of the PhnSTUV complex (TC 3.A.1.11.5) involved in 2-aminoethylphosphonate import. Probably responsible for energy coupling to the transport system. The protein is Putative 2-aminoethylphosphonate import ATP-binding protein PhnT (phnT) of Salmonella typhi.